A 141-amino-acid polypeptide reads, in one-letter code: Hemoglobin subunit alpha (141 aa).

Positions 1 to 141 (VLSSTDKSNV…VSTVLTSKYR (141 aa)) constitute a Globin domain. Ser-3 carries the phosphoserine modification. N6-succinyllysine occurs at positions 7 and 11. Lys-16 bears the N6-acetyllysine; alternate mark. An N6-succinyllysine; alternate modification is found at Lys-16. Phosphotyrosine is present on Tyr-24. Ser-35 is modified (phosphoserine). Lys-40 is modified (N6-succinyllysine). Position 58 (His-58) interacts with O2. His-87 is a heme b binding site. Ser-102 carries the phosphoserine modification. Thr-108 carries the post-translational modification Phosphothreonine. Phosphoserine is present on residues Ser-124 and Ser-131. Residues Thr-134 and Thr-137 each carry the phosphothreonine modification. Position 138 is a phosphoserine (Ser-138).

It belongs to the globin family. Heterotetramer of two alpha chains and two beta chains. Red blood cells.

Its function is as follows. Involved in oxygen transport from the lung to the various peripheral tissues. Hemopressin acts as an antagonist peptide of the cannabinoid receptor CNR1. Hemopressin-binding efficiently blocks cannabinoid receptor CNR1 and subsequent signaling. The protein is Hemoglobin subunit alpha of Pteropus vampyrus (Large flying fox).